The sequence spans 746 residues: MEEEVQQHSHCMNCVSRRCMTRPEPGVSCDLIGCPLVCGAVFHSCKADEHRLLCPFERVACLNRNFGCPFTLARNKVAEHLEMCPASVVCCTMEWNRWPVSYSDRKSYESLSRDVDEVAQLDMALALQDQRMLLESLKVATMMSKATDKISEPREQISVKSSVQEIPRTNGLVSVDEESYGALYQATVETTRSLAAALDILNSATRDIGMLNTSLHATANEMDEENNKESFQDKNLKDQDHLDEGEIGAVGGVDYSGTSQNAQAEQNGSSDLLCDLNPSSNGTSALCNGFPLEKMCIQVKGQDQNFHGDSTESNITNGDCVEADGTSEPSSSLVVPEQLREISPFSALPDSTFQQILMPDEDDEKDLCWKKVDLGDLKDVNGSPFSHAPSFKFLSNSWYIPKEDKAVDTSDLEVAEDPMGLQGIDLITAALLFCLGDSPGGRGISDSRMTDVYHVDFGTQTFSLPSAILATNTMVGEIASASACDHANPQLSNPSPFQTLGLDLVLECVARYQPKQRSMFTFVCGQLFRRKEFSSHFKNVHGDIHAGLNGWMEQRCPLAYYGCTYSQRRFCPSTQGAKIIHDRHLRSFGVQPCVSTVLEEPSRNCVLGLRSDHLSSLPFEVLQHIAGFLDGFSLCQLACVSRLMRDVCGSLLQSRGMVILQWGKKKYPEGNSSWQIKEKVWRFSTAFCSVNDWKFADILSMADHLKNCSYNVIEKREEAIPLPCMCVTRELTKEGRSLRSVLKPVL.

A TRAF-type zinc finger spans residues 49-110 (EHRLLCPFER…SYSDRKSYES (62 aa)). Disordered stretches follow at residues 222–241 (MDEE…DQDH) and 247–266 (IGAV…QAEQ). Basic and acidic residues predominate over residues 225–241 (ENNKESFQDKNLKDQDH). The segment covering 256–266 (SGTSQNAQAEQ) has biased composition (polar residues). Phosphoserine is present on S383. The 49-residue stretch at 611-659 (SDHLSSLPFEVLQHIAGFLDGFSLCQLACVSRLMRDVCGSLLQSRGMVI) folds into the F-box domain.

As to quaternary structure, part of a SCF (SKP1-cullin-F-box) protein ligase complex. Interacts with SKP1, CUL1 and RBX1/ROC1. Post-translationally, auto-ubiquitinated. In terms of processing, may be neddylated. Neddylation may be required for E3 ligase activity, since it was observed only after purification with o-phenanthroline.

It participates in protein modification; protein ubiquitination. In terms of biological role, substrate-recognition component of the SCF (SKP1-CUL1-F-box protein)-type E3 ubiquitin ligase complex. Required for muscle atrophy following denervation. This is F-box only protein 30 (Fbxo30) from Mus musculus (Mouse).